Reading from the N-terminus, the 187-residue chain is dITP/XTP pyrophosphatase (187 aa).

Threonine 7 to lysine 12 lines the substrate pocket. Residues glutamate 36 and aspartate 64 each coordinate Mg(2+). The active-site Proton acceptor is aspartate 64. Residues alanine 65, phenylalanine 140–aspartate 143, lysine 163, and histidine 168–arginine 169 contribute to the substrate site.

This sequence belongs to the HAM1 NTPase family. As to quaternary structure, homodimer. Mg(2+) serves as cofactor.

The catalysed reaction is XTP + H2O = XMP + diphosphate + H(+). It carries out the reaction dITP + H2O = dIMP + diphosphate + H(+). The enzyme catalyses ITP + H2O = IMP + diphosphate + H(+). Its function is as follows. Pyrophosphatase that catalyzes the hydrolysis of nucleoside triphosphates to their monophosphate derivatives, with a high preference for the non-canonical purine nucleotides XTP (xanthosine triphosphate), dITP (deoxyinosine triphosphate) and ITP. Seems to function as a house-cleaning enzyme that removes non-canonical purine nucleotides from the nucleotide pool, thus preventing their incorporation into DNA/RNA and avoiding chromosomal lesions. This Methanothermobacter marburgensis (strain ATCC BAA-927 / DSM 2133 / JCM 14651 / NBRC 100331 / OCM 82 / Marburg) (Methanobacterium thermoautotrophicum) protein is dITP/XTP pyrophosphatase.